Reading from the N-terminus, the 519-residue chain is Cobyric acid synthase (519 aa).

In terms of domain architecture, GATase cobBQ-type spans 256-438 (WLRVAVPRLP…WHGLFENDAF (183 aa)). Cysteine 337 (nucleophile) is an active-site residue. Residue histidine 430 is part of the active site.

It belongs to the CobB/CobQ family. CobQ subfamily.

It participates in cofactor biosynthesis; adenosylcobalamin biosynthesis. Functionally, catalyzes amidations at positions B, D, E, and G on adenosylcobyrinic A,C-diamide. NH(2) groups are provided by glutamine, and one molecule of ATP is hydrogenolyzed for each amidation. This Saccharopolyspora erythraea (strain ATCC 11635 / DSM 40517 / JCM 4748 / NBRC 13426 / NCIMB 8594 / NRRL 2338) protein is Cobyric acid synthase.